The chain runs to 217 residues: 3,4-dihydroxy-2-butanone 4-phosphate synthase (217 aa).

Residues R37–E38, D42, R150–T154, and E174 each bind D-ribulose 5-phosphate. E38 serves as a coordination point for Mg(2+). H153 is a Mg(2+) binding site.

This sequence belongs to the DHBP synthase family. Homodimer. Mg(2+) is required as a cofactor. Mn(2+) serves as cofactor.

The catalysed reaction is D-ribulose 5-phosphate = (2S)-2-hydroxy-3-oxobutyl phosphate + formate + H(+). Its pathway is cofactor biosynthesis; riboflavin biosynthesis; 2-hydroxy-3-oxobutyl phosphate from D-ribulose 5-phosphate: step 1/1. Catalyzes the conversion of D-ribulose 5-phosphate to formate and 3,4-dihydroxy-2-butanone 4-phosphate. In Shewanella sp. (strain W3-18-1), this protein is 3,4-dihydroxy-2-butanone 4-phosphate synthase.